A 688-amino-acid polypeptide reads, in one-letter code: Translation initiation factor IF-2 (688 aa).

Positions 50–62 (LLSGKEKSEKTKE) are enriched in basic and acidic residues. Residues 50–95 (LLSGKEKSEKTKEEDDEIETTAKNPIKESINNKKSNKRDDKNEKVN) form a disordered region. Low complexity predominate over residues 72 to 82 (KNPIKESINNK). Residues 86–95 (KRDDKNEKVN) are compositionally biased toward basic and acidic residues. Residues 187-354 (KRSPIITVMG…MILLSSEILE (168 aa)) form the tr-type G domain. A G1 region spans residues 196–203 (GHVDHGKT). 196-203 (GHVDHGKT) contributes to the GTP binding site. A G2 region spans residues 221–225 (GITQH). Positions 242 to 245 (DTPG) are G3. GTP-binding positions include 242-246 (DTPGH) and 296-299 (NKID). The interval 296–299 (NKID) is G4. A G5 region spans residues 332–334 (SAH).

Belongs to the TRAFAC class translation factor GTPase superfamily. Classic translation factor GTPase family. IF-2 subfamily.

The protein resides in the cytoplasm. Its function is as follows. One of the essential components for the initiation of protein synthesis. Protects formylmethionyl-tRNA from spontaneous hydrolysis and promotes its binding to the 30S ribosomal subunits. Also involved in the hydrolysis of GTP during the formation of the 70S ribosomal complex. The polypeptide is Translation initiation factor IF-2 (Clostridium botulinum (strain Langeland / NCTC 10281 / Type F)).